The following is a 337-amino-acid chain: tRNA N6-adenosine threonylcarbamoyltransferase (337 aa).

Histidine 111 and histidine 115 together coordinate Fe cation. Residues 134–138, aspartate 167, glycine 180, and asparagine 272 each bind substrate; that span reads LVSGG. Residue aspartate 300 coordinates Fe cation.

This sequence belongs to the KAE1 / TsaD family. The cofactor is Fe(2+).

It localises to the cytoplasm. The catalysed reaction is L-threonylcarbamoyladenylate + adenosine(37) in tRNA = N(6)-L-threonylcarbamoyladenosine(37) in tRNA + AMP + H(+). Functionally, required for the formation of a threonylcarbamoyl group on adenosine at position 37 (t(6)A37) in tRNAs that read codons beginning with adenine. Is involved in the transfer of the threonylcarbamoyl moiety of threonylcarbamoyl-AMP (TC-AMP) to the N6 group of A37, together with TsaE and TsaB. TsaD likely plays a direct catalytic role in this reaction. The protein is tRNA N6-adenosine threonylcarbamoyltransferase of Escherichia coli (strain SMS-3-5 / SECEC).